We begin with the raw amino-acid sequence, 331 residues long: DNA polymerase III subunit delta (331 aa).

The protein belongs to the DNA polymerase HolA subunit family. DNA polymerase III contains a core (composed of alpha, epsilon and theta chains) that associates with a tau subunit. This core dimerizes to form the POLIII' complex. PolIII' associates with the gamma complex (composed of gamma, delta, delta', psi and chi chains) and with the beta chain to form the complete DNA polymerase III complex.

The catalysed reaction is DNA(n) + a 2'-deoxyribonucleoside 5'-triphosphate = DNA(n+1) + diphosphate. Its function is as follows. DNA polymerase III is a complex, multichain enzyme responsible for most of the replicative synthesis in bacteria. This DNA polymerase also exhibits 3' to 5' exonuclease activity. The delta subunit seems to interact with the gamma subunit to transfer the beta subunit on the DNA. This Buchnera aphidicola subsp. Acyrthosiphon pisum (strain APS) (Acyrthosiphon pisum symbiotic bacterium) protein is DNA polymerase III subunit delta (holA).